The sequence spans 524 residues: Lysine--tRNA ligase (524 aa).

Positions alanine 39 to serine 47 match the 'HIGH' region motif. Residues lysine 294–serine 298 carry the 'KMSKS' region motif. Lysine 297 serves as a coordination point for ATP.

It belongs to the class-I aminoacyl-tRNA synthetase family.

Its subcellular location is the cytoplasm. The enzyme catalyses tRNA(Lys) + L-lysine + ATP = L-lysyl-tRNA(Lys) + AMP + diphosphate. The polypeptide is Lysine--tRNA ligase (lysS) (Cenarchaeum symbiosum).